We begin with the raw amino-acid sequence, 285 residues long: Aspartate/glutamate leucyltransferase (285 aa).

This sequence belongs to the R-transferase family. Bpt subfamily.

Its subcellular location is the cytoplasm. It carries out the reaction N-terminal L-glutamyl-[protein] + L-leucyl-tRNA(Leu) = N-terminal L-leucyl-L-glutamyl-[protein] + tRNA(Leu) + H(+). It catalyses the reaction N-terminal L-aspartyl-[protein] + L-leucyl-tRNA(Leu) = N-terminal L-leucyl-L-aspartyl-[protein] + tRNA(Leu) + H(+). Functions in the N-end rule pathway of protein degradation where it conjugates Leu from its aminoacyl-tRNA to the N-termini of proteins containing an N-terminal aspartate or glutamate. The sequence is that of Aspartate/glutamate leucyltransferase from Dinoroseobacter shibae (strain DSM 16493 / NCIMB 14021 / DFL 12).